The sequence spans 445 residues: Acetylcholine-gated chloride channel subunit acc-2 (445 aa).

Residues 1–26 form the signal peptide; the sequence is MIFTLLSTLPVLIITTELDYSELVHS. Over 27–258 the chain is Extracellular; it reads AELVSSSSYI…LHVTIIFERR (232 aa). Residues Asn46, Asn59, Asn121, and Asn162 are each glycosylated (N-linked (GlcNAc...) asparagine). Cysteines 177 and 191 form a disulfide. Asn218 carries N-linked (GlcNAc...) asparagine glycosylation. Residues 259–279 traverse the membrane as a helical segment; sequence FIWYFMQAYLPTYLTIFISWI. Residues 280–286 lie on the Cytoplasmic side of the membrane; it reads SFSLGSR. Residues 287–307 form a helical membrane-spanning segment; the sequence is AIPARTMLGVNSLLAIVFSFG. Topologically, residues 308 to 326 are extracellular; that stretch reads NIMRNLPRVSYIKGIDVWM. The helical transmembrane segment at 327-347 threads the bilayer; the sequence is LVSMTFIFCSLLELAIVGFMV. Over 348-407 the chain is Cytoplasmic; sequence RDETVAKKKQQKKISGNISREESPHGIISERRFMFPPGCSESSKSLSSCTSGWTPERIDS. Residues 408 to 428 form a helical membrane-spanning segment; the sequence is ISSVMFPFSFFVFNIIYWFYY. Residues 429–445 are Extracellular-facing; the sequence is IHRKEIIKQNLINRVDG.

This sequence belongs to the ligand-gated ion channel (TC 1.A.9) family. As to quaternary structure, homopentamer (in vitro). May interact with either acc-3 or acc-4; the interactions do not result in significant heteropentameric ion channel activity. Expressed in RIA, RIG, PHA and AIZ glutamatergic neurons, URX and RIH cholinergic neurons, and in male-specific MCM neurons.

The protein resides in the cell membrane. In terms of biological role, acetylcholine-gated chloride channel subunit. Currents in channels are triggered in response to acetylcholine. Channel properties may be modulated by the formation of homomeric and heteromeric channels. The sequence is that of Acetylcholine-gated chloride channel subunit acc-2 from Caenorhabditis elegans.